Consider the following 886-residue polypeptide: Phycobiliprotein ApcE (886 aa).

C187 is a binding site for (2R,3E)-phycocyanobilin. PBS-linker domains are found at residues D244 to V424, Q496 to K678, and N695 to V876.

Belongs to the phycobilisome linker protein family. In terms of processing, contains one covalently linked bilin chromophore. This protein autochromophorylates (Potential).

The protein resides in the plastid. Its subcellular location is the chloroplast thylakoid membrane. This protein is postulated to act both as terminal energy acceptor and as a linker polypeptide that stabilizes the phycobilisome architecture. May have intrinsic bilin lyase activity. The polypeptide is Phycobiliprotein ApcE (apcE) (Porphyra purpurea (Red seaweed)).